A 144-amino-acid polypeptide reads, in one-letter code: Peptide methionine sulfoxide reductase MsrB (144 aa).

Basic and acidic residues predominate over residues 1–12; sequence MDKQQGELRQRL. The tract at residues 1–25 is disordered; it reads MDKQQGELRQRLTPEQYAVTQEAAT. One can recognise a MsrB domain in the interval 5–128; it reads QGELRQRLTP…NSAALKFIPV (124 aa). The active-site Nucleophile is the cysteine 117.

Belongs to the MsrB Met sulfoxide reductase family.

The enzyme catalyses L-methionyl-[protein] + [thioredoxin]-disulfide + H2O = L-methionyl-(R)-S-oxide-[protein] + [thioredoxin]-dithiol. This chain is Peptide methionine sulfoxide reductase MsrB, found in Lactiplantibacillus plantarum (strain ATCC BAA-793 / NCIMB 8826 / WCFS1) (Lactobacillus plantarum).